The following is a 364-amino-acid chain: Pectinesterase (364 aa).

A signal peptide spans 1–22 (MSCIAVEAVLLGILLYIPIVLS). Asparagine 103 is a glycosylation site (N-linked (GlcNAc...) asparagine). The active site involves aspartate 220.

The protein localises to the secreted. It carries out the reaction [(1-&gt;4)-alpha-D-galacturonosyl methyl ester](n) + n H2O = [(1-&gt;4)-alpha-D-galacturonosyl](n) + n methanol + n H(+). Its pathway is glycan metabolism; pectin degradation; 2-dehydro-3-deoxy-D-gluconate from pectin: step 1/5. Catalyzes the demethylesterification of homogalacturonan components of pectin. This chain is Pectinesterase, found in Parthenium hysterophorus (Santa Maria feverfew).